The primary structure comprises 223 residues: Probable transaldolase (223 aa).

The active-site Schiff-base intermediate with substrate is the Lys92.

The protein belongs to the transaldolase family. Type 3B subfamily.

It localises to the cytoplasm. It catalyses the reaction D-sedoheptulose 7-phosphate + D-glyceraldehyde 3-phosphate = D-erythrose 4-phosphate + beta-D-fructose 6-phosphate. It functions in the pathway carbohydrate degradation; pentose phosphate pathway; D-glyceraldehyde 3-phosphate and beta-D-fructose 6-phosphate from D-ribose 5-phosphate and D-xylulose 5-phosphate (non-oxidative stage): step 2/3. In terms of biological role, transaldolase is important for the balance of metabolites in the pentose-phosphate pathway. The chain is Probable transaldolase from Thermus thermophilus (strain ATCC 27634 / DSM 579 / HB8).